Reading from the N-terminus, the 225-residue chain is NAD(P)H-quinone oxidoreductase subunit K, chloroplastic (225 aa).

Positions 43, 44, 108, and 139 each coordinate [4Fe-4S] cluster.

Belongs to the complex I 20 kDa subunit family. As to quaternary structure, NDH is composed of at least 16 different subunits, 5 of which are encoded in the nucleus. Requires [4Fe-4S] cluster as cofactor.

It localises to the plastid. The protein resides in the chloroplast thylakoid membrane. It catalyses the reaction a plastoquinone + NADH + (n+1) H(+)(in) = a plastoquinol + NAD(+) + n H(+)(out). The enzyme catalyses a plastoquinone + NADPH + (n+1) H(+)(in) = a plastoquinol + NADP(+) + n H(+)(out). NDH shuttles electrons from NAD(P)H:plastoquinone, via FMN and iron-sulfur (Fe-S) centers, to quinones in the photosynthetic chain and possibly in a chloroplast respiratory chain. The immediate electron acceptor for the enzyme in this species is believed to be plastoquinone. Couples the redox reaction to proton translocation, and thus conserves the redox energy in a proton gradient. This chain is NAD(P)H-quinone oxidoreductase subunit K, chloroplastic, found in Eucalyptus globulus subsp. globulus (Tasmanian blue gum).